The sequence spans 290 residues: 33 kDa chaperonin (290 aa).

2 cysteine pairs are disulfide-bonded: C231–C233 and C263–C266.

This sequence belongs to the HSP33 family. In terms of processing, under oxidizing conditions two disulfide bonds are formed involving the reactive cysteines. Under reducing conditions zinc is bound to the reactive cysteines and the protein is inactive.

It is found in the cytoplasm. Redox regulated molecular chaperone. Protects both thermally unfolding and oxidatively damaged proteins from irreversible aggregation. Plays an important role in the bacterial defense system toward oxidative stress. This is 33 kDa chaperonin from Thermotoga petrophila (strain ATCC BAA-488 / DSM 13995 / JCM 10881 / RKU-1).